Reading from the N-terminus, the 489-residue chain is Protein P7 (489 aa).

RNA-binding stretches follow at residues 129–251 (TSLI…GRML) and 321–351 (AGDYGNNVIIIENPPHSDVRGLGVKYSFQVN).

The protein belongs to the phytoreovirus protein P7 family.

Its subcellular location is the virion. It localises to the host cytoplasm. Functionally, probable component of the transcriptional machinery present in the inner capsid. Displays dsRNA binding activity and may play an important role in the sorting of viral RNA and virion assembly. Together with the RNA-directed RNA polymerase P1 and capping enzyme P5, forms an transcriptional complex positioned near the channels situated at each of the five-fold vertices of the core. The polypeptide is Protein P7 (Rice gall dwarf virus (RGDV)).